A 324-amino-acid chain; its full sequence is S-methyl-5'-thioadenosine phosphorylase (324 aa).

Phosphate-binding positions include Ser14, 57-58 (RH), and 90-91 (SA). Met196 is a substrate binding site. Phosphate is bound at residue Ser197. 220-222 (DYD) lines the substrate pocket.

The protein belongs to the PNP/MTAP phosphorylase family. MTAP subfamily. Homotrimer.

The protein localises to the cytoplasm. It localises to the nucleus. The enzyme catalyses S-methyl-5'-thioadenosine + phosphate = 5-(methylsulfanyl)-alpha-D-ribose 1-phosphate + adenine. The protein operates within amino-acid biosynthesis; L-methionine biosynthesis via salvage pathway; S-methyl-5-thio-alpha-D-ribose 1-phosphate from S-methyl-5'-thioadenosine (phosphorylase route): step 1/1. Catalyzes the reversible phosphorylation of S-methyl-5'-thioadenosine (MTA) to adenine and 5-methylthioribose-1-phosphate. Involved in the breakdown of MTA, a major by-product of polyamine biosynthesis. Responsible for the first step in the methionine salvage pathway after MTA has been generated from S-adenosylmethionine. Has broad substrate specificity with 6-aminopurine nucleosides as preferred substrates. This is S-methyl-5'-thioadenosine phosphorylase from Coprinopsis cinerea (strain Okayama-7 / 130 / ATCC MYA-4618 / FGSC 9003) (Inky cap fungus).